Consider the following 245-residue polypeptide: Probable metal transport system ATP-binding protein CPn_0542/CP_0210/CPj0542/CpB0563 (245 aa).

An ABC transporter domain is found at Ile-5–Phe-240. Gly-39–Ser-46 serves as a coordination point for ATP.

It belongs to the ABC transporter superfamily.

It is found in the cell inner membrane. In terms of biological role, part of an ATP-driven transport system CPn0541/CPn0542/CPn0543 for a metal. Probably responsible for energy coupling to the transport system. In Chlamydia pneumoniae (Chlamydophila pneumoniae), this protein is Probable metal transport system ATP-binding protein CPn_0542/CP_0210/CPj0542/CpB0563.